Reading from the N-terminus, the 156-residue chain is 3-hydroxyacyl-[acyl-carrier-protein] dehydratase FabZ (156 aa).

The active site involves His-50.

This sequence belongs to the thioester dehydratase family. FabZ subfamily.

It is found in the cytoplasm. It catalyses the reaction a (3R)-hydroxyacyl-[ACP] = a (2E)-enoyl-[ACP] + H2O. In terms of biological role, involved in unsaturated fatty acids biosynthesis. Catalyzes the dehydration of short chain beta-hydroxyacyl-ACPs and long chain saturated and unsaturated beta-hydroxyacyl-ACPs. This Janthinobacterium sp. (strain Marseille) (Minibacterium massiliensis) protein is 3-hydroxyacyl-[acyl-carrier-protein] dehydratase FabZ.